The following is a 342-amino-acid chain: MPHKDNLLESPVGKSVTATIAYHSGPALPTSPIAGVTTLQDCTQQAVAVTDIRPSVSSFTLDGNGFQVVKHTSAVGSPPYDHSSWTDPVVRKEVYDPEIIELAKSLTGAKKVMILLASSRNVPFKEPELAPPYPMPGKSSSGSKEREAIPANELPTTRAKGFQKGEEEGPVRKPHKDWGPSGAWNTLRNWSQELIDEAGDIIKAGDEAAKLPGGRAKNYQGRRWALYTTWRPLKTVKRDPMAYVDYWTADEEDGVSFWRNPPGVHGTFESDVLLTKANPKHKWYWISDQTPDEVLLMKIMDTESEKDGSEIAGGVHHCSFHLPGTEKEEVRESIETKFIAFW.

A disordered region spans residues 127 to 183; sequence PELAPPYPMPGKSSSGSKEREAIPANELPTTRAKGFQKGEEEGPVRKPHKDWGPSGA.

The protein belongs to the asaB hydroxylase/desaturase family.

It participates in plant hormone biosynthesis; gibberellin biosynthesis. In terms of biological role, GA4 desaturase; part of the gene cluster that mediates the biosynthesis of gibberellins (GAs), diterpenoids that may provide a selective advantage during infection of the preferred host plant, rice. Gibberellins (GAs) are diterpenoids and are synthesized via the mevalonate pathway. Biosynthesis of the major metabolite GA3 (gibberellic acid) from geranylgeranyl diphosphate (GGPP) requires 13 steps. The GGPP produced by the geranylgeranyl diphosphate synthase GGS2 is converted to ent-kaurene via ent-copalyldiphosphate in a two-step cyclization reaction performed by the bifunctional ent-copalyl diphosphate synthase/ent-kaurene synthase enzyme (CPS/KS). Ent-Kaurene is metabolized to GAs by a series of oxidation reactions catalyzed by cytochrome P450 monooxygenases. Cytochrome P450 monooxygenase P450-4 is an ent-kaurene oxidase that catalyzes the three oxidation steps between ent-kaurene and ent-kaurenoic acid. The highly multifunctional cytochrome P450 monooxygenase P450-1 then catalyzes four steps involving oxidation at two carbon atoms, in the main pathway from ent-kaurenoic acid to GA14 via GA12-aldehyde as well as producing kaurenolides and fujenoic acids as by-products. The cytochrome P450 monooxygenase P450-2 then converts GA14 to GA4 by removal of C-20. GA4 is further converted to GA7 by the GA4 desaturase DES via 1,2-desaturation before cytochrome P450 monooxygenase P450-3, a 13-hydroxylase, hydroxylates GA7 to GA3, the final product of the GA-biosynthetic pathway. This chain is Gibberellin cluster GA4 desaturase, found in Gibberella fujikuroi (strain CBS 195.34 / IMI 58289 / NRRL A-6831) (Bakanae and foot rot disease fungus).